The sequence spans 1229 residues: Phosphorylase b kinase regulatory subunit alpha, liver isoform (1229 aa).

Positions 625–646 (DSLLEDDEEQEEEEEDKFEDDY) are enriched in acidic residues. The disordered stretch occupies residues 625–648 (DSLLEDDEEQEEEEEDKFEDDYNN). Positions 825–855 (LEELYIQAGACKEWGLIRYISGILRKRVEVL) are calmodulin-binding. The tract at residues 1024–1050 (EIKQRCSSPSTPSGILSPVGPGPADGQ) is disordered. Polar residues predominate over residues 1028-1037 (RCSSPSTPSG). A calmodulin-binding region spans residues 1052–1092 (HWVERQGQWLRRRRLDGAINRVPVGFYQKVWKILQKCHGLS). Cys-1226 carries the S-farnesyl cysteine lipid modification.

This sequence belongs to the phosphorylase b kinase regulatory chain family. Polymer of 16 chains, four each of alpha, beta, gamma, and delta. Alpha and beta are regulatory chains, gamma is the catalytic chain, and delta is calmodulin. Although the final Cys may be farnesylated, the terminal tripeptide is probably not removed, and the C-terminus is not methylated.

Its subcellular location is the cell membrane. Its pathway is glycan biosynthesis; glycogen metabolism. By phosphorylation of various serine residues and by calcium. Functionally, phosphorylase b kinase catalyzes the phosphorylation of serine in certain substrates, including troponin I. The alpha chain may bind calmodulin. This is Phosphorylase b kinase regulatory subunit alpha, liver isoform (phka2) from Takifugu rubripes (Japanese pufferfish).